The chain runs to 373 residues: Cell division protein FtsZ 1 (373 aa).

Residues 51–55 (GAGCN), 138–140 (GTG), E169, R173, and D216 contribute to the GTP site. Residues 354 to 373 (EESYFGEEERRPIKLDLDEL) are disordered. The segment covering 360-373 (EEERRPIKLDLDEL) has biased composition (basic and acidic residues).

This sequence belongs to the FtsZ family. Homodimer. Polymerizes to form a dynamic ring structure in a strictly GTP-dependent manner. Interacts directly with several other division proteins.

The protein resides in the cytoplasm. Functionally, essential cell division protein that forms a contractile ring structure (Z ring) at the future cell division site. The regulation of the ring assembly controls the timing and the location of cell division. One of the functions of the FtsZ ring is to recruit other cell division proteins to the septum to produce a new cell wall between the dividing cells. Binds GTP and shows GTPase activity. This chain is Cell division protein FtsZ 1, found in Thermococcus kodakarensis (strain ATCC BAA-918 / JCM 12380 / KOD1) (Pyrococcus kodakaraensis (strain KOD1)).